The primary structure comprises 558 residues: Small ribosomal subunit protein bS1 (558 aa).

S1 motif domains lie at 21–87, 105–171, 192–260, 277–347, 364–434, and 451–520; these read GSII…LSRE, SETV…VSRR, GMHV…LGLK, ETKL…LGLK, GVHV…LGIK, and GAII…LTIH.

It belongs to the bacterial ribosomal protein bS1 family.

Its function is as follows. Binds mRNA; thus facilitating recognition of the initiation point. It is needed to translate mRNA with a short Shine-Dalgarno (SD) purine-rich sequence. The chain is Small ribosomal subunit protein bS1 (rpsA) from Buchnera aphidicola subsp. Acyrthosiphon pisum (strain APS) (Acyrthosiphon pisum symbiotic bacterium).